The sequence spans 295 residues: Light-independent protochlorophyllide reductase iron-sulfur ATP-binding protein (295 aa).

ATP is bound by residues 39-44 (GIGKST) and Lys-68. Ser-43 provides a ligand contact to Mg(2+). Residues Cys-124 and Cys-158 each contribute to the [4Fe-4S] cluster site. 209 to 210 (NR) is a binding site for ATP.

It belongs to the NifH/BchL/ChlL family. As to quaternary structure, homodimer. Protochlorophyllide reductase is composed of three subunits; ChlL, ChlN and ChlB. The cofactor is [4Fe-4S] cluster.

It carries out the reaction chlorophyllide a + oxidized 2[4Fe-4S]-[ferredoxin] + 2 ADP + 2 phosphate = protochlorophyllide a + reduced 2[4Fe-4S]-[ferredoxin] + 2 ATP + 2 H2O. It participates in porphyrin-containing compound metabolism; chlorophyll biosynthesis (light-independent). In terms of biological role, component of the dark-operative protochlorophyllide reductase (DPOR) that uses Mg-ATP and reduced ferredoxin to reduce ring D of protochlorophyllide (Pchlide) to form chlorophyllide a (Chlide). This reaction is light-independent. The L component serves as a unique electron donor to the NB-component of the complex, and binds Mg-ATP. This is Light-independent protochlorophyllide reductase iron-sulfur ATP-binding protein from Prochlorococcus marinus (strain MIT 9301).